A 344-amino-acid polypeptide reads, in one-letter code: Galactoside alpha-(1,2)-fucosyltransferase 2 (344 aa).

Topologically, residues 1–7 (MFSTQTF) are cytoplasmic. Residues 8–28 (FFFPTAPFILFVFTASTIFHL) traverse the membrane as a helical; Signal-anchor for type II membrane protein segment. The Lumenal portion of the chain corresponds to 29–344 (HQRLEKMQPT…PADLSPLLKH (316 aa)). Residues Asn-189, Asn-255, Asn-283, and Asn-309 are each glycosylated (N-linked (GlcNAc...) asparagine).

As to expression, expressed in brain, heart, lung, intestin and kidney.

The protein localises to the golgi apparatus. Its subcellular location is the golgi stack membrane. The enzyme catalyses a beta-D-galactosyl-(1-&gt;3)-N-acetyl-beta-D-glucosaminyl derivative + GDP-beta-L-fucose = an alpha-L-Fuc-(1-&gt;2)-beta-D-Gal-(1-&gt;3)-beta-D-GlcNAc derivative + GDP + H(+). The catalysed reaction is a beta-D-galactosyl-(1-&gt;4)-N-acetyl-beta-D-glucosaminyl derivative + GDP-beta-L-fucose = an alpha-L-Fuc-(1-&gt;2)-beta-D-Gal-(1-&gt;4)-beta-D-GlcNAc derivative + GDP + H(+). It catalyses the reaction a ganglioside GM1 + GDP-beta-L-fucose = a ganglioside Fuc-GM1 + GDP + H(+). It carries out the reaction a neolactoside nLc4Cer + GDP-beta-L-fucose = a neolactoside IV(2)-alpha-Fuc-nLc4Cer + GDP + H(+). The enzyme catalyses a neolactoside nLc4Cer(d18:1(4E)) + GDP-beta-L-fucose = a neolactoside IV(2)-alpha-Fuc-nLc4Cer(d18:1(4E)) + GDP + H(+). The catalysed reaction is a ganglioside GA1 + GDP-beta-L-fucose = a ganglioside Fuc-GA1 + GDP + H(+). It catalyses the reaction Lc4Cer + GDP-beta-L-fucose = alpha-L-fucosyl-(1-&gt;2)-beta-D-galactosyl-(1-&gt;3)-N-acetyl-beta-D-glucosaminyl-(1-&gt;3)-beta-D-galactosyl-(1-&gt;4)-beta-D-glucosyl-(1&lt;-&gt;1')-ceramide + GDP + H(+). It carries out the reaction a beta-D-Gal-(1-&gt;3)-beta-D-GlcNAc-(1-&gt;3)-beta-D-Gal-(1-&gt;4)-beta-D-Glc-(1&lt;-&gt;1')-Cer(d18:1(4E)) + GDP-beta-L-fucose = alpha-L-fucosyl-(1-&gt;2)- beta-D-galactosyl-(1-&gt;3)-N-acetyl-beta-D-glucosaminyl-(1-&gt;3)-beta-D-galactosyl-(1-&gt;4)-beta-D-glucosyl-(1&lt;-&gt;1')-N-acylsphing-4-enine + GDP + H(+). The enzyme catalyses a ganglioside GD1b + GDP-beta-L-fucose = a ganglioside Fuc-GD1b + GDP + H(+). The catalysed reaction is a ganglioside GM1 (d18:1(4E)) + GDP-beta-L-fucose = a ganglioside Fuc-GM1 (d18:1(4E)) + GDP + H(+). It catalyses the reaction a globoside GalGb4Cer (d18:1(4E)) + GDP-beta-L-fucose = a globoside Globo-H (d18:1(4E)) + GDP + H(+). It carries out the reaction a lactoside III(4)-a-Fuc-Lc4Cer + GDP-beta-L-fucose = a lactoside IV(2),III(4)-a-[Fuc]2-Lc4Cer + GDP + H(+). The enzyme catalyses beta-D-galactosyl-(1-&gt;3)-N-acetyl-D-galactosamine + GDP-beta-L-fucose = alpha-L-fucosyl-(1-&gt;2)-beta-D-galactosyl-(1-&gt;3)-N-acetyl-D-galactosamine + GDP + H(+). It functions in the pathway protein modification; protein glycosylation. Functionally, catalyzes the transfer of L-fucose, from a guanosine diphosphate-beta-L-fucose, to the terminal galactose on both O- and N-linked glycans chains of cell surface glycoproteins and glycolipids and the resulting epitope regulates several processes such as cell-cell interaction including host-microbe interaction, cell surface expression and cell proliferation. Preferentially fucosylates gangliosides GA1 and GM1 in the antrum, cecum and colon and in the female reproductive organs. Fucosylated host glycoproteins or glycolipids mediate interaction with intestinal microbiota influencing its composition. Creates a soluble precursor oligosaccharide FuC-alpha ((1,2)Galbeta-) called the H antigen which is an essential substrate for the final step in the soluble ABO blood group antigen synthesis pathway. This is Galactoside alpha-(1,2)-fucosyltransferase 2 from Bos taurus (Bovine).